Consider the following 320-residue polypeptide: Cytochrome f (320 aa).

A signal peptide spans 1–35 (MQTRNTFSWIKEEITRSISVSLMIYIITGASISNA). Positions 36, 56, 59, and 60 each coordinate heme. The chain crosses the membrane as a helical span at residues 286–306 (VQGLLFFLASIVFAQIFLVLK).

It belongs to the cytochrome f family. In terms of assembly, the 4 large subunits of the cytochrome b6-f complex are cytochrome b6, subunit IV (17 kDa polypeptide, petD), cytochrome f and the Rieske protein, while the 4 small subunits are PetG, PetL, PetM and PetN. The complex functions as a dimer. Heme serves as cofactor.

The protein localises to the plastid. Its subcellular location is the chloroplast thylakoid membrane. In terms of biological role, component of the cytochrome b6-f complex, which mediates electron transfer between photosystem II (PSII) and photosystem I (PSI), cyclic electron flow around PSI, and state transitions. The polypeptide is Cytochrome f (Gossypium hirsutum (Upland cotton)).